Here is a 137-residue protein sequence, read N- to C-terminus: TSC22 domain family protein 3 (137 aa).

An AP1-binding region spans residues 1–60 (MNTEMYQTPMEVAVYQLHNFSISFFSSLLGGDVVSVKLDNSASGASVVALDNKIEQAMDL). Phosphoserine is present on residues Asn40 and Val73. A leucine-zipper region spans residues 76–97 (LKEQIRELLEKNSQLERENTLL). Residues 101–137 (ASPEQLEKFQSRLSPEEPAPEAPETPETPEAPGGSAV) are disordered. Ser102 is modified (phosphoserine). 2 positions are modified to phosphothreonine: Thr125 and Thr128. The segment covering 128–137 (TPEAPGGSAV) has biased composition (low complexity).

Belongs to the TSC-22/Dip/Bun family. Can form homodimers, however it is likely to function as a monomer. Interacts with NFKB1. Interacts (via N-terminus) with JUN and FOS; these interactions inhibit the binding of active AP1 to its target DNA. In terms of assembly, interacts with MYOD1. Interacts with HDAC1; this interaction affects HDAC1 activity on MYOG promoter and thus inhibits MYOD1 transcriptional activity. As to quaternary structure, interacts with MYOD1. In terms of tissue distribution, expressed in T-cells. Expression inversely correlates with T-cell activation, being higher in resting cells and lower in cells activated by TCR/CD3 triggering (at protein level). Constitutively expressed in lung, intestine, kidney and liver, most probably by resident cells from the macrophage lineage. Expressed in thymus, lymph nodes, bone marrow, spleen, lung and skeletal muscle. As to expression, expressed in spleen and skeletal muscle (at protein level). Expressed in the cortex, medulla and papilla of the kidney. Expressed in the cortex, medulla and papilla of the kidney. In terms of tissue distribution, expressed in spleen and skeletal muscle (at protein level).

The protein resides in the cytoplasm. Its subcellular location is the nucleus. Its function is as follows. Protects T-cells from IL2 deprivation-induced apoptosis through the inhibition of FOXO3A transcriptional activity that leads to the down-regulation of the pro-apoptotic factor BCL2L11. In macrophages, plays a role in the anti-inflammatory and immunosuppressive effects of glucocorticoids and IL10. In T-cells, inhibits anti-CD3-induced NFKB1 nuclear translocation and thereby NFKB1 DNA-binding activities. In vitro, suppresses AP-1 transcription factor complex DNA-binding activities. Inhibits myogenic differentiation and mediates anti-myogenic effects of glucocorticoids by binding and regulating MYOD1 and HDAC1 transcriptional activity resulting in reduced expression of MYOG. This chain is TSC22 domain family protein 3, found in Mus musculus (Mouse).